A 509-amino-acid polypeptide reads, in one-letter code: tRNA-2-methylthio-N(6)-dimethylallyladenosine synthase (509 aa).

Positions 1-15 (MNEQQRLASQQANSS) are enriched in polar residues. A disordered region spans residues 1 to 25 (MNEQQRLASQQANSSTKKEEKDYSK). The segment covering 16–25 (TKKEEKDYSK) has biased composition (basic and acidic residues). In terms of domain architecture, MTTase N-terminal spans 66–184 (RKFYIRTYGC…LPYILKDAMF (119 aa)). Residues Cys75, Cys111, Cys145, Cys221, Cys225, and Cys228 each coordinate [4Fe-4S] cluster. In terms of domain architecture, Radical SAM core spans 207-437 (RRGDIKAWVN…NTLVNTLAIE (231 aa)). The region spanning 440 to 503 (SRYKGQIVEV…TWSLNGELVE (64 aa)) is the TRAM domain.

It belongs to the methylthiotransferase family. MiaB subfamily. Monomer. [4Fe-4S] cluster serves as cofactor.

The protein resides in the cytoplasm. The catalysed reaction is N(6)-dimethylallyladenosine(37) in tRNA + (sulfur carrier)-SH + AH2 + 2 S-adenosyl-L-methionine = 2-methylsulfanyl-N(6)-dimethylallyladenosine(37) in tRNA + (sulfur carrier)-H + 5'-deoxyadenosine + L-methionine + A + S-adenosyl-L-homocysteine + 2 H(+). Functionally, catalyzes the methylthiolation of N6-(dimethylallyl)adenosine (i(6)A), leading to the formation of 2-methylthio-N6-(dimethylallyl)adenosine (ms(2)i(6)A) at position 37 in tRNAs that read codons beginning with uridine. This chain is tRNA-2-methylthio-N(6)-dimethylallyladenosine synthase, found in Bacillus cereus (strain B4264).